Reading from the N-terminus, the 466-residue chain is Asparagine--tRNA ligase (466 aa).

This sequence belongs to the class-II aminoacyl-tRNA synthetase family. In terms of assembly, homodimer.

The protein localises to the cytoplasm. The enzyme catalyses tRNA(Asn) + L-asparagine + ATP = L-asparaginyl-tRNA(Asn) + AMP + diphosphate + H(+). In Wigglesworthia glossinidia brevipalpis, this protein is Asparagine--tRNA ligase.